The primary structure comprises 479 residues: ATP synthase subunit beta (479 aa).

An ATP-binding site is contributed by G162–T169.

This sequence belongs to the ATPase alpha/beta chains family. As to quaternary structure, F-type ATPases have 2 components, CF(1) - the catalytic core - and CF(0) - the membrane proton channel. CF(1) has five subunits: alpha(3), beta(3), gamma(1), delta(1), epsilon(1). CF(0) has three main subunits: a(1), b(2) and c(9-12). The alpha and beta chains form an alternating ring which encloses part of the gamma chain. CF(1) is attached to CF(0) by a central stalk formed by the gamma and epsilon chains, while a peripheral stalk is formed by the delta and b chains.

The protein resides in the cell membrane. The catalysed reaction is ATP + H2O + 4 H(+)(in) = ADP + phosphate + 5 H(+)(out). Produces ATP from ADP in the presence of a proton gradient across the membrane. The catalytic sites are hosted primarily by the beta subunits. The sequence is that of ATP synthase subunit beta from Mesoplasma florum (strain ATCC 33453 / NBRC 100688 / NCTC 11704 / L1) (Acholeplasma florum).